We begin with the raw amino-acid sequence, 360 residues long: Phosphoserine aminotransferase (360 aa).

L-glutamate is bound at residue Arg42. Pyridoxal 5'-phosphate contacts are provided by residues 76–77, Trp102, Thr152, Asp172, and Gln195; that span reads AR. The residue at position 196 (Lys196) is an N6-(pyridoxal phosphate)lysine. 237-238 provides a ligand contact to pyridoxal 5'-phosphate; the sequence is NT.

The protein belongs to the class-V pyridoxal-phosphate-dependent aminotransferase family. SerC subfamily. As to quaternary structure, homodimer. Requires pyridoxal 5'-phosphate as cofactor.

The protein resides in the cytoplasm. The enzyme catalyses O-phospho-L-serine + 2-oxoglutarate = 3-phosphooxypyruvate + L-glutamate. The catalysed reaction is 4-(phosphooxy)-L-threonine + 2-oxoglutarate = (R)-3-hydroxy-2-oxo-4-phosphooxybutanoate + L-glutamate. The protein operates within amino-acid biosynthesis; L-serine biosynthesis; L-serine from 3-phospho-D-glycerate: step 2/3. It functions in the pathway cofactor biosynthesis; pyridoxine 5'-phosphate biosynthesis; pyridoxine 5'-phosphate from D-erythrose 4-phosphate: step 3/5. Functionally, catalyzes the reversible conversion of 3-phosphohydroxypyruvate to phosphoserine and of 3-hydroxy-2-oxo-4-phosphonooxybutanoate to phosphohydroxythreonine. The sequence is that of Phosphoserine aminotransferase from Pasteurella multocida (strain Pm70).